The primary structure comprises 184 residues: Elongation factor P (184 aa).

It belongs to the elongation factor P family.

It localises to the cytoplasm. The protein operates within protein biosynthesis; polypeptide chain elongation. Its function is as follows. Involved in peptide bond synthesis. Stimulates efficient translation and peptide-bond synthesis on native or reconstituted 70S ribosomes in vitro. Probably functions indirectly by altering the affinity of the ribosome for aminoacyl-tRNA, thus increasing their reactivity as acceptors for peptidyl transferase. The polypeptide is Elongation factor P (Acidovorax ebreus (strain TPSY) (Diaphorobacter sp. (strain TPSY))).